We begin with the raw amino-acid sequence, 206 residues long: Small ribosomal subunit protein uS4 (206 aa).

The segment at 18–45 is disordered; sequence NIWGRPKSPVNRREYGPGQHGQRRKGKM. Positions 94-157 constitute an S4 RNA-binding domain; it reads RRLDAVVYRA…KQLASVLEAV (64 aa).

This sequence belongs to the universal ribosomal protein uS4 family. In terms of assembly, part of the 30S ribosomal subunit. Contacts protein S5. The interaction surface between S4 and S5 is involved in control of translational fidelity.

One of the primary rRNA binding proteins, it binds directly to 16S rRNA where it nucleates assembly of the body of the 30S subunit. Functionally, with S5 and S12 plays an important role in translational accuracy. This Ruegeria pomeroyi (strain ATCC 700808 / DSM 15171 / DSS-3) (Silicibacter pomeroyi) protein is Small ribosomal subunit protein uS4.